The primary structure comprises 92 residues: Small ribosomal subunit protein uS19 (92 aa).

The protein belongs to the universal ribosomal protein uS19 family.

Functionally, protein S19 forms a complex with S13 that binds strongly to the 16S ribosomal RNA. This Rickettsia africae (strain ESF-5) protein is Small ribosomal subunit protein uS19.